The sequence spans 275 residues: 4-diphosphocytidyl-2-C-methyl-D-erythritol kinase (275 aa).

K14 is a catalytic residue. 98 to 108 provides a ligand contact to ATP; it reads PMGAGLGGGSS. Residue D140 is part of the active site.

It belongs to the GHMP kinase family. IspE subfamily.

The enzyme catalyses 4-CDP-2-C-methyl-D-erythritol + ATP = 4-CDP-2-C-methyl-D-erythritol 2-phosphate + ADP + H(+). It participates in isoprenoid biosynthesis; isopentenyl diphosphate biosynthesis via DXP pathway; isopentenyl diphosphate from 1-deoxy-D-xylulose 5-phosphate: step 3/6. Catalyzes the phosphorylation of the position 2 hydroxy group of 4-diphosphocytidyl-2C-methyl-D-erythritol. The polypeptide is 4-diphosphocytidyl-2-C-methyl-D-erythritol kinase (Francisella tularensis subsp. holarctica (strain FTNF002-00 / FTA)).